A 691-amino-acid chain; its full sequence is Elongation factor G (691 aa).

Residues Glu8 to Ala283 form the tr-type G domain. GTP contacts are provided by residues Ala17–Thr24, Asp81–His85, and Asn135–Asp138.

Belongs to the TRAFAC class translation factor GTPase superfamily. Classic translation factor GTPase family. EF-G/EF-2 subfamily.

The protein localises to the cytoplasm. In terms of biological role, catalyzes the GTP-dependent ribosomal translocation step during translation elongation. During this step, the ribosome changes from the pre-translocational (PRE) to the post-translocational (POST) state as the newly formed A-site-bound peptidyl-tRNA and P-site-bound deacylated tRNA move to the P and E sites, respectively. Catalyzes the coordinated movement of the two tRNA molecules, the mRNA and conformational changes in the ribosome. This Methylobacterium radiotolerans (strain ATCC 27329 / DSM 1819 / JCM 2831 / NBRC 15690 / NCIMB 10815 / 0-1) protein is Elongation factor G.